A 283-amino-acid chain; its full sequence is Shikimate kinase (283 aa).

86-96 is a binding site for ATP; it reads PIKSGLSSSSA.

Belongs to the GHMP kinase family. Archaeal shikimate kinase subfamily.

It is found in the cytoplasm. The catalysed reaction is shikimate + ATP = 3-phosphoshikimate + ADP + H(+). The protein operates within metabolic intermediate biosynthesis; chorismate biosynthesis; chorismate from D-erythrose 4-phosphate and phosphoenolpyruvate: step 5/7. This is Shikimate kinase from Methanococcus maripaludis (strain C6 / ATCC BAA-1332).